Reading from the N-terminus, the 332-residue chain is Thiamine thiazole synthase (332 aa).

Residues Cys-87, 108–109 (EA), Gly-116, and Val-184 each bind substrate. Residue Cys-221 is modified to 2,3-didehydroalanine (Cys). Residues Asp-223, His-238, Met-290, and 300-302 (RMG) contribute to the substrate site.

It belongs to the THI4 family. In terms of assembly, homooctamer. Fe cation is required as a cofactor. Post-translationally, during the catalytic reaction, a sulfide is transferred from Cys-221 to a reaction intermediate, generating a dehydroalanine residue.

Its subcellular location is the cytoplasm. It is found in the nucleus. It carries out the reaction [ADP-thiazole synthase]-L-cysteine + glycine + NAD(+) = [ADP-thiazole synthase]-dehydroalanine + ADP-5-ethyl-4-methylthiazole-2-carboxylate + nicotinamide + 3 H2O + 2 H(+). Involved in biosynthesis of the thiamine precursor thiazole. Catalyzes the conversion of NAD and glycine to adenosine diphosphate 5-(2-hydroxyethyl)-4-methylthiazole-2-carboxylic acid (ADT), an adenylated thiazole intermediate. The reaction includes an iron-dependent sulfide transfer from a conserved cysteine residue of the protein to a thiazole intermediate. The enzyme can only undergo a single turnover, which suggests it is a suicide enzyme. May have additional roles in adaptation to various stress conditions and in DNA damage tolerance. This Aspergillus fumigatus (strain ATCC MYA-4609 / CBS 101355 / FGSC A1100 / Af293) (Neosartorya fumigata) protein is Thiamine thiazole synthase.